We begin with the raw amino-acid sequence, 375 residues long: Protein HrmA (375 aa).

Unknown. May serve a regulatory function. The protein is Protein HrmA (hrmA) of Pseudomonas syringae pv. syringae.